A 242-amino-acid polypeptide reads, in one-letter code: Large ribosomal subunit protein uL3 (242 aa).

The disordered stretch occupies residues 131 to 165 (GRATHGNSVSHRTHGSTGQRQDPGKVFKGKKMAGH). Residues 135–150 (HGNSVSHRTHGSTGQR) show a composition bias toward polar residues. Gln151 carries the N5-methylglutamine modification.

Belongs to the universal ribosomal protein uL3 family. In terms of assembly, part of the 50S ribosomal subunit. Forms a cluster with proteins L14 and L19. Post-translationally, methylated by PrmB.

Its function is as follows. One of the primary rRNA binding proteins, it binds directly near the 3'-end of the 23S rRNA, where it nucleates assembly of the 50S subunit. In Chelativorans sp. (strain BNC1), this protein is Large ribosomal subunit protein uL3.